The chain runs to 362 residues: Chorismate synthase (362 aa).

The NADP(+) site is built by arginine 48 and arginine 54. Residues 131-133 (RSS), 243-244 (NA), glycine 287, 302-306 (KPTSS), and arginine 328 contribute to the FMN site.

The protein belongs to the chorismate synthase family. Homotetramer. Requires FMNH2 as cofactor.

It catalyses the reaction 5-O-(1-carboxyvinyl)-3-phosphoshikimate = chorismate + phosphate. The protein operates within metabolic intermediate biosynthesis; chorismate biosynthesis; chorismate from D-erythrose 4-phosphate and phosphoenolpyruvate: step 7/7. Functionally, catalyzes the anti-1,4-elimination of the C-3 phosphate and the C-6 proR hydrogen from 5-enolpyruvylshikimate-3-phosphate (EPSP) to yield chorismate, which is the branch point compound that serves as the starting substrate for the three terminal pathways of aromatic amino acid biosynthesis. This reaction introduces a second double bond into the aromatic ring system. The protein is Chorismate synthase of Rhodopseudomonas palustris (strain ATCC BAA-98 / CGA009).